The primary structure comprises 371 residues: Liposome tubulation protein MamY (371 aa).

At 1–18 (MLMNFVNNVSKTINGGAR) the chain is on the cytoplasmic side. Residues 19 to 39 (IVYVGSFSWAVLSLLFVTAFS) form a helical membrane-spanning segment. The Lumenal segment spans residues 40–51 (GWNNIFSMLPHE). A helical membrane pass occupies residues 52–72 (IFILVLTISLPIALIVLIFML). Residues 73–371 (SQIVRTVESV…LIDGTPISDA (299 aa)) are Cytoplasmic-facing.

It belongs to the magnetosome MamY family. Probably interacts with MamX and MamZ proteins.

The protein localises to the magnetosome membrane. May be involved in constriction of the cell inner membrane to form mature magnetosomes. Binds cardiolipin and liposomes. May function with MamX, MamZ amd Mms6 in biomineralization. The chain is Liposome tubulation protein MamY from Magnetospirillum gryphiswaldense (strain DSM 6361 / JCM 21280 / NBRC 15271 / MSR-1).